The following is a 503-amino-acid chain: SusD-like protein P38 (503 aa).

Positions 1–21 (MKKFKNISITFLILISLGVLN) are cleaved as a signal peptide.

The protein belongs to the SusD family.

Its subcellular location is the cell outer membrane. Polysaccharide-binding protein probably involved in ulvan degradation. Ulvan is the main polysaccharide component of the Ulvales (green seaweed) cell wall. It is composed of disaccharide building blocks comprising 3-sulfated rhamnose (Rha3S) linked to D-glucuronic acid (GlcA), L-iduronic acid (IduA), or D-xylose (Xyl). The SusD-like protein may mediate ulvan oligomer-binding before transport in the periplasm for further degradation. The sequence is that of SusD-like protein P38 from Formosa agariphila (strain DSM 15362 / KCTC 12365 / LMG 23005 / KMM 3901 / M-2Alg 35-1).